Consider the following 95-residue polypeptide: Aspartyl/glutamyl-tRNA(Asn/Gln) amidotransferase subunit C (95 aa).

This sequence belongs to the GatC family. As to quaternary structure, heterotrimer of A, B and C subunits.

It carries out the reaction L-glutamyl-tRNA(Gln) + L-glutamine + ATP + H2O = L-glutaminyl-tRNA(Gln) + L-glutamate + ADP + phosphate + H(+). It catalyses the reaction L-aspartyl-tRNA(Asn) + L-glutamine + ATP + H2O = L-asparaginyl-tRNA(Asn) + L-glutamate + ADP + phosphate + 2 H(+). Its function is as follows. Allows the formation of correctly charged Asn-tRNA(Asn) or Gln-tRNA(Gln) through the transamidation of misacylated Asp-tRNA(Asn) or Glu-tRNA(Gln) in organisms which lack either or both of asparaginyl-tRNA or glutaminyl-tRNA synthetases. The reaction takes place in the presence of glutamine and ATP through an activated phospho-Asp-tRNA(Asn) or phospho-Glu-tRNA(Gln). This Pseudomonas syringae pv. syringae (strain B728a) protein is Aspartyl/glutamyl-tRNA(Asn/Gln) amidotransferase subunit C.